Here is a 476-residue protein sequence, read N- to C-terminus: Protein DETOXIFICATION 1 (476 aa).

A run of 12 helical transmembrane segments spans residues 35-55, 66-86, 117-137, 146-166, 184-204, 208-228, 260-280, 289-309, 331-351, 370-390, 402-422, and 433-453; these read AAPM…SVMV, GVAL…CGLV, IPIC…LISL, IAGS…IVIP, AVTT…LFGL, GPAM…SCYV, AAMI…SGLL, VLSI…GVAA, VLAG…LLFT, VADL…TAVL, IGAW…GIYL, and LWCG…IVTA.

The protein belongs to the multi antimicrobial extrusion (MATE) (TC 2.A.66.1) family. As to expression, ubiquitous. Highest expression in flowers and stems.

It is found in the cell membrane. Efflux carrier for plant-derived alkaloids, antibiotics, heavy metal and other toxic compounds. Involved in cadmium detoxification. Requires probably a proton-motive force for the efflux. In Arabidopsis thaliana (Mouse-ear cress), this protein is Protein DETOXIFICATION 1.